The chain runs to 375 residues: 23S rRNA (uracil(747)-C(5))-methyltransferase RlmC (375 aa).

C3, C11, C14, and C87 together coordinate [4Fe-4S] cluster. 4 residues coordinate S-adenosyl-L-methionine: Q212, F241, E262, and N307. C334 acts as the Nucleophile in catalysis.

The protein belongs to the class I-like SAM-binding methyltransferase superfamily. RNA M5U methyltransferase family. RlmC subfamily.

The catalysed reaction is uridine(747) in 23S rRNA + S-adenosyl-L-methionine = 5-methyluridine(747) in 23S rRNA + S-adenosyl-L-homocysteine + H(+). Catalyzes the formation of 5-methyl-uridine at position 747 (m5U747) in 23S rRNA. This Escherichia coli O7:K1 (strain IAI39 / ExPEC) protein is 23S rRNA (uracil(747)-C(5))-methyltransferase RlmC.